Here is a 307-residue protein sequence, read N- to C-terminus: Nicotinamide/nicotinic acid mononucleotide adenylyltransferase 2 (307 aa).

NAD(+) is bound by residues Ser16 and Phe17. His24 serves as a coordination point for ATP. Trp92, Thr95, Gly200, Asp202, Leu212, Trp213, and Arg232 together coordinate NAD(+). Residue 271–274 coordinates ATP; that stretch reads TKSR.

Belongs to the eukaryotic NMN adenylyltransferase family. As to quaternary structure, monomer. Requires Mg(2+) as cofactor.

Its subcellular location is the golgi apparatus membrane. It is found in the cytoplasmic vesicle membrane. The protein resides in the cytoplasm. It localises to the cell projection. The protein localises to the axon. It carries out the reaction beta-nicotinamide D-ribonucleotide + ATP + H(+) = diphosphate + NAD(+). It catalyses the reaction nicotinate beta-D-ribonucleotide + ATP + H(+) = deamido-NAD(+) + diphosphate. Its pathway is cofactor biosynthesis; NAD(+) biosynthesis; NAD(+) from nicotinamide D-ribonucleotide: step 1/1. It participates in cofactor biosynthesis; NAD(+) biosynthesis; deamido-NAD(+) from nicotinate D-ribonucleotide: step 1/1. Nicotinamide/nicotinate-nucleotide adenylyltransferase that acts as an axon maintenance factor. Axon survival factor required for the maintenance of healthy axons: acts by delaying Wallerian axon degeneration, an evolutionarily conserved process that drives the loss of damaged axons. Catalyzes the formation of NAD(+) from nicotinamide mononucleotide (NMN) and ATP. Can also use the deamidated form; nicotinic acid mononucleotide (NaMN) as substrate but with a lower efficiency. Also catalyzes the reverse reaction, i.e. the pyrophosphorolytic cleavage of NAD(+). For the pyrophosphorolytic activity prefers NAD(+), NADH and NaAD as substrates and degrades nicotinic acid adenine dinucleotide phosphate (NHD) less effectively. Also acts as an activator of ADP-ribosylation by supporting the catalytic activity of PARP16 and promoting mono-ADP-ribosylation of ribosomes by PARP16. May be involved in the maintenance of axonal integrity. The chain is Nicotinamide/nicotinic acid mononucleotide adenylyltransferase 2 (nmnat2) from Xenopus tropicalis (Western clawed frog).